The primary structure comprises 300 residues: Taste receptor type 2 member 105 (300 aa).

Topologically, residues 1-7 (MLSAAEG) are extracellular. Residues 8 to 28 (ILLSIATVEAGLGVLGNTFIA) form a helical membrane-spanning segment. Over 29 to 43 (LVNCMDWAKNNKLSM) the chain is Cytoplasmic. Residues 44–64 (TGFLLIGLATSRIFIVWLLTL) traverse the membrane as a helical segment. The Extracellular portion of the chain corresponds to 65–87 (DAYAKLFYPSKYFSSSLIEIISY). A helical transmembrane segment spans residues 88 to 108 (IWMTVNHLTVWFATSLSIFYF). Topologically, residues 109 to 128 (LKIANFSDCVFLWLKRRTDK) are cytoplasmic. A helical membrane pass occupies residues 129–149 (AFVFLLGCLLTSWVISFSFVV). The Extracellular segment spans residues 150–181 (KVMKDGKVNHRNRTSEMYWEKRQFTINYVFLN). N-linked (GlcNAc...) asparagine glycosylation is present at N161. Residues 182 to 202 (IGVISLFMMTLTACFLLIMSL) traverse the membrane as a helical segment. At 203–233 (WRHSRQMQSGVSGFRDLNTEAHVKAIKFLIS) the chain is on the cytoplasmic side. A helical transmembrane segment spans residues 234-254 (FIILFVLYFIGVSIEIICIFI). Residues 255–259 (PENKL) lie on the Extracellular side of the membrane. Residues 260–280 (LFIFGFTTASIYPCCHSFILI) traverse the membrane as a helical segment. Topologically, residues 281-300 (LSNSQLKQAFVKVLQGLKFF) are cytoplasmic.

This sequence belongs to the G-protein coupled receptor T2R family. Expressed in subsets of taste receptor cells of the tongue and palate epithelium and exclusively in gustducin-positive cells. Expressed in gastric and duodenal tissues.

It is found in the membrane. Gustducin-coupled cycloheximide receptor implicated in the perception of bitter compounds in the oral cavity and the gastrointestinal tract. Signals through PLCB2 and the calcium-regulated cation channel TRPM5. The sequence is that of Taste receptor type 2 member 105 (Tas2r105) from Mus musculus (Mouse).